The primary structure comprises 362 residues: Serine/threonine-protein kinase SBK2 (362 aa).

Over residues 1-11 (MPGKQSEDKPM) the composition is skewed to basic and acidic residues. The disordered stretch occupies residues 1-26 (MPGKQSEDKPMEVSTVEDGGDEGLGG). One can recognise a Protein kinase domain in the interval 62–330 (YEEVRPLGQG…IKSYLGQPWK (269 aa)). ATP contacts are provided by residues 68-76 (LGQGRFGRV) and Lys91. Catalysis depends on Asp183, which acts as the Proton acceptor. The segment at 329 to 362 (WKQREGEAEELATELREDGWRGGQEAAKGEQPAC) is disordered.

Belongs to the protein kinase superfamily. Ser/Thr protein kinase family. STKL subfamily.

The catalysed reaction is L-seryl-[protein] + ATP = O-phospho-L-seryl-[protein] + ADP + H(+). It catalyses the reaction L-threonyl-[protein] + ATP = O-phospho-L-threonyl-[protein] + ADP + H(+). This Mus musculus (Mouse) protein is Serine/threonine-protein kinase SBK2 (Sbk2).